A 222-amino-acid polypeptide reads, in one-letter code: 2-C-methyl-D-erythritol 2,4-cyclodiphosphate synthase, chloroplastic (222 aa).

Residues 1–43 constitute a chloroplast transit peptide; it reads MATASSLFLASPVATAPTARARSTPSASPARPSLRLRRPSTLA. A divalent metal cation contacts are provided by Asp73 and His75. Substrate contacts are provided by residues 73-75, 99-100, 103-111, 121-123, 126-130, Asp130, 165-171, and 196-200; these read DLH, HS, DVLLHCVVD, DIG, FPDSD, LQKPKIS, and AKTHE. Residue His107 coordinates a divalent metal cation.

The protein belongs to the IspF family. Homotrimer. It depends on a divalent metal cation as a cofactor. In terms of tissue distribution, expressed in roots, leaves, stems, leaf sheaths and young panicles.

It localises to the plastid. It is found in the chloroplast. The enzyme catalyses 4-CDP-2-C-methyl-D-erythritol 2-phosphate = 2-C-methyl-D-erythritol 2,4-cyclic diphosphate + CMP. It functions in the pathway isoprenoid biosynthesis; isopentenyl diphosphate biosynthesis via DXP pathway; isopentenyl diphosphate from 1-deoxy-D-xylulose 5-phosphate: step 4/6. Its function is as follows. Enzyme of the plastid non-mevalonate pathway for isoprenoid biosynthesis that converts 4-diphosphocytidyl-2C-methyl-D-erythritol 2-phosphate into 2C-methyl-D-erythritol 2,4-cyclodiphosphate and CMP. Is essential for chloroplast development. The chain is 2-C-methyl-D-erythritol 2,4-cyclodiphosphate synthase, chloroplastic from Oryza sativa subsp. japonica (Rice).